Reading from the N-terminus, the 803-residue chain is MutS protein homolog 4 (803 aa).

Residue 557 to 564 (GANMSGKS) coordinates ATP.

It belongs to the DNA mismatch repair MutS family. As to quaternary structure, heterooligomer of MSH4 and MSH5.

Its function is as follows. Involved in meiotic recombination. Facilitate crossovers between homologs during meiosis. The sequence is that of MutS protein homolog 4 (MSH4) from Candida albicans (Yeast).